We begin with the raw amino-acid sequence, 355 residues long: MNNNSIEYRKLEHLIVCDHCDVEYKKGTLLEDVELIHSGISNCDLDDIDTSIEIFGKKLNAPLIVAAITGGHPKAKEVNKNIAIAVEELNLGMGVGSQRAAISKSYLEDTYSVVRDHTSSLIIGNLGAVNFVEDSWDEEIISKSVEMIDADAMAIHFNPLQEAIQPEGDVNFKGLNILKEIISNYNKIHGKIPFIAKQVGEGFSKKDAIFLKEIGFDAIDVGGSGGTSWAAVELYRIKDEEQKNFSNQYFNWGIPTAASILEVNSAFSGPIIATGGIRTGIDIAKSISIGANCCGTALPILKAALKSSEAVTTVLERMIKELKTTMFLTGCNNINELKSARYILKGDLKNWKDQI.

9 to 10 (RK) is a substrate binding site. FMN contacts are provided by residues 67–69 (AIT), serine 97, and asparagine 125. 97-99 (SQR) is a substrate binding site. Glutamine 161 is a binding site for substrate. A Mg(2+)-binding site is contributed by glutamate 162. Residues lysine 197, threonine 227, 276 to 278 (GIR), and 297 to 298 (AL) contribute to the FMN site.

The protein belongs to the IPP isomerase type 2 family. As to quaternary structure, homooctamer. Dimer of tetramers. FMN is required as a cofactor. The cofactor is NADPH. It depends on Mg(2+) as a cofactor.

The protein localises to the cytoplasm. It catalyses the reaction isopentenyl diphosphate = dimethylallyl diphosphate. In terms of biological role, involved in the biosynthesis of isoprenoids. Catalyzes the 1,3-allylic rearrangement of the homoallylic substrate isopentenyl (IPP) to its allylic isomer, dimethylallyl diphosphate (DMAPP). This Methanococcus maripaludis (strain DSM 14266 / JCM 13030 / NBRC 101832 / S2 / LL) protein is Isopentenyl-diphosphate delta-isomerase.